We begin with the raw amino-acid sequence, 134 residues long: D-ribose pyranase (134 aa).

H20 (proton donor) is an active-site residue. Residues D28, H99, and Y123 to N125 contribute to the substrate site.

This sequence belongs to the RbsD / FucU family. RbsD subfamily. Homodecamer.

The protein localises to the cytoplasm. It catalyses the reaction beta-D-ribopyranose = beta-D-ribofuranose. The protein operates within carbohydrate metabolism; D-ribose degradation; D-ribose 5-phosphate from beta-D-ribopyranose: step 1/2. Catalyzes the interconversion of beta-pyran and beta-furan forms of D-ribose. The sequence is that of D-ribose pyranase from Staphylococcus aureus (strain USA300).